The sequence spans 295 residues: Protease HtpX (295 aa).

Helical transmembrane passes span 4 to 24 (ILLF…TLSL) and 42 to 62 (QLLI…LFIS). Histidine 147 serves as a coordination point for Zn(2+). The active site involves glutamate 148. Histidine 151 provides a ligand contact to Zn(2+). Transmembrane regions (helical) follow at residues 158-178 (VTLA…ARII) and 199-219 (VATI…VMWF). Residue glutamate 224 participates in Zn(2+) binding.

The protein belongs to the peptidase M48B family. The cofactor is Zn(2+).

It is found in the cell inner membrane. This chain is Protease HtpX, found in Pseudomonas fluorescens (strain ATCC BAA-477 / NRRL B-23932 / Pf-5).